The primary structure comprises 215 residues: Adenylate kinase (215 aa).

10–15 (GAGKGT) serves as a coordination point for ATP. An NMP region spans residues 30-59 (STGDIFRKNISENTPLGMEARSYMDKGLLV). Residues Thr-31, Arg-36, 57 to 59 (LLV), 85 to 88 (GFPR), and Gln-92 each bind AMP. Residues 126–163 (GRRVCTSCGGSFHIKFNPPTIDGKCNLCGSDIVQRKDD) form an LID region. Arg-127 contacts ATP. Zn(2+) contacts are provided by Cys-130 and Cys-133. 136-137 (SF) lines the ATP pocket. Zn(2+) is bound by residues Cys-150 and Cys-153. Positions 160 and 171 each coordinate AMP. Lys-199 is an ATP binding site.

It belongs to the adenylate kinase family. In terms of assembly, monomer.

The protein resides in the cytoplasm. It carries out the reaction AMP + ATP = 2 ADP. It functions in the pathway purine metabolism; AMP biosynthesis via salvage pathway; AMP from ADP: step 1/1. Its function is as follows. Catalyzes the reversible transfer of the terminal phosphate group between ATP and AMP. Plays an important role in cellular energy homeostasis and in adenine nucleotide metabolism. The chain is Adenylate kinase from Clostridium botulinum (strain Alaska E43 / Type E3).